The chain runs to 422 residues: UDP-N-acetylglucosamine 1-carboxyvinyltransferase (422 aa).

22–23 serves as a coordination point for phosphoenolpyruvate; the sequence is KN. Position 93 (arginine 93) interacts with UDP-N-acetyl-alpha-D-glucosamine. Catalysis depends on cysteine 117, which acts as the Proton donor. Cysteine 117 carries the post-translational modification 2-(S-cysteinyl)pyruvic acid O-phosphothioketal. Residues 122 to 126, aspartate 308, and isoleucine 330 each bind UDP-N-acetyl-alpha-D-glucosamine; that span reads RPVDL.

This sequence belongs to the EPSP synthase family. MurA subfamily.

The protein localises to the cytoplasm. The enzyme catalyses phosphoenolpyruvate + UDP-N-acetyl-alpha-D-glucosamine = UDP-N-acetyl-3-O-(1-carboxyvinyl)-alpha-D-glucosamine + phosphate. It participates in cell wall biogenesis; peptidoglycan biosynthesis. In terms of biological role, cell wall formation. Adds enolpyruvyl to UDP-N-acetylglucosamine. In Legionella pneumophila (strain Paris), this protein is UDP-N-acetylglucosamine 1-carboxyvinyltransferase.